A 442-amino-acid chain; its full sequence is DNA topoisomerase medium subunit (442 aa).

In terms of domain architecture, Topo IIA-type catalytic spans 29–438 (IPNMIDGFKP…DVVTEYTKDL (410 aa)). Tyr117 acts as the O-(5'-phospho-DNA)-tyrosine intermediate in catalysis.

It belongs to the type II topoisomerase family. In terms of assembly, part of the DNA topoisomerase complex made of gp39, gp52 and gp60. It depends on Mg(2+) as a cofactor.

The enzyme catalyses ATP-dependent breakage, passage and rejoining of double-stranded DNA.. In terms of biological role, medium subunit of the DNA topoisomerase that untwists superhelical DNA. Controls topological states of double-stranded DNA by transient breakage and subsequent rejoining of DNA strands. This Enterobacteria phage T4 (Bacteriophage T4) protein is DNA topoisomerase medium subunit (52).